We begin with the raw amino-acid sequence, 429 residues long: Glucose-6-phosphate isomerase (429 aa).

Residue E282 is the Proton donor of the active site. Catalysis depends on residues H303 and K418.

The protein belongs to the GPI family.

The protein resides in the cytoplasm. The enzyme catalyses alpha-D-glucose 6-phosphate = beta-D-fructose 6-phosphate. It participates in carbohydrate biosynthesis; gluconeogenesis. The protein operates within carbohydrate degradation; glycolysis; D-glyceraldehyde 3-phosphate and glycerone phosphate from D-glucose: step 2/4. Catalyzes the reversible isomerization of glucose-6-phosphate to fructose-6-phosphate. In Mesomycoplasma hyopneumoniae (strain 232) (Mycoplasma hyopneumoniae), this protein is Glucose-6-phosphate isomerase.